The following is a 515-amino-acid chain: Signal transduction histidine-protein kinase/phosphatase MprB (515 aa).

At M1 to R24 the chain is on the cytoplasmic side. Residues V25–Y45 form a helical membrane-spanning segment. At A46–T165 the chain is on the extracellular side. Residues V166–A186 form a helical membrane-spanning segment. The HAMP domain maps to R187–E239. Topologically, residues R187–L515 are cytoplasmic. The Histidine kinase domain occupies D247–P467. A Phosphohistidine; by autocatalysis modification is found at H250. The segment at L468–L515 is disordered.

Mg(2+) is required as a cofactor. The cofactor is Mn(2+). In terms of processing, autophosphorylated.

The protein localises to the cell membrane. It carries out the reaction ATP + protein L-histidine = ADP + protein N-phospho-L-histidine.. Its function is as follows. Member of the two-component regulatory system MprB/MprA which contributes to maintaining a balance among several systems involved in stress resistance and is required for establishment and maintenance of persistent infection in the host. In response to environmental signals MprB acts both as a membrane-associated protein kinase that undergoes autophosphorylation and subsequently transfers the phosphate to MprA, and a protein phosphatase that dephosphorylates phospho-MprA. This chain is Signal transduction histidine-protein kinase/phosphatase MprB (mprB), found in Mycobacterium sp. (strain JLS).